The sequence spans 240 residues: MATLFIADLHLCVEEPAITAGFLRFLAGEARKADALYILGDLFEAWIGDDDPNPLHRKMAAAIKAVSDSGVPCYFIHGNRDFLLGKRFARESGMTLLPEEKVLELYGRRVLIMHGDTLCTDDAGYQAFRAKVHKPWLQTLFLALPLFVRKRIAARMRANSKEANSSKSLAIMDVNQNAVVSAMEKHQVQWLIHGHTHRPAVHELIANQQPAFRVVLGAWHTEGSMVKVTADDVELIHFPF.

Positions 8, 10, 41, 79, and 114 each coordinate Mn(2+). 79 to 80 (NR) provides a ligand contact to substrate. Substrate-binding residues include Asp122, Ser160, Asn164, Lys167, and His195. Residues His195 and His197 each coordinate Mn(2+).

Belongs to the LpxH family. The cofactor is Mn(2+).

The protein localises to the cell inner membrane. Its subcellular location is the cytoplasm. The enzyme catalyses UDP-2-N,3-O-bis[(3R)-3-hydroxytetradecanoyl]-alpha-D-glucosamine + H2O = 2-N,3-O-bis[(3R)-3-hydroxytetradecanoyl]-alpha-D-glucosaminyl 1-phosphate + UMP + 2 H(+). It participates in glycolipid biosynthesis; lipid IV(A) biosynthesis; lipid IV(A) from (3R)-3-hydroxytetradecanoyl-[acyl-carrier-protein] and UDP-N-acetyl-alpha-D-glucosamine: step 4/6. With respect to regulation, inhibited by a sulfonyl piperazine compound that shows antibacterial activity against E.coli; LpxH is the cellular target of this compound. Inhibited by 0.01% (or more) Triton X-100 in vitro. Hydrolyzes the pyrophosphate bond of UDP-2,3-diacylglucosamine to yield 2,3-diacylglucosamine 1-phosphate (lipid X) and UMP by catalyzing the attack of water at the alpha-P atom. Involved in the biosynthesis of lipid A, a phosphorylated glycolipid that anchors the lipopolysaccharide to the outer membrane of the cell. Is essential for E.coli growth. Does not cleave the unacylated UDP-GlcNAc, the mono-acylated UDP-3-O-(R)-3-hydroxymyristoyl-GlcNAc, and CDP-diacylglycerol. This Escherichia coli (strain K12) protein is UDP-2,3-diacylglucosamine hydrolase.